The primary structure comprises 345 residues: Type II methyltransferase M.AplI (345 aa).

Positions 25-325 constitute an SAM-dependent MTase C5-type domain; it reads LVVLDLFAGC…KSVKMTLENK (301 aa). Cysteine 93 is a catalytic residue.

Belongs to the class I-like SAM-binding methyltransferase superfamily. C5-methyltransferase family.

It carries out the reaction a 2'-deoxycytidine in DNA + S-adenosyl-L-methionine = a 5-methyl-2'-deoxycytidine in DNA + S-adenosyl-L-homocysteine + H(+). Its function is as follows. A methylase, recognizes the double-stranded sequence 5'-CTGCAG-3', methylates C-4 on both strands, and protects the DNA from cleavage by the AplI endonuclease. The polypeptide is Type II methyltransferase M.AplI (aplIM) (Arthrospira platensis (strain NIES-39 / UTEX 3086 / IAM M-135) (Spirulina platensis)).